The primary structure comprises 336 residues: TBC1 domain family member 21 (336 aa).

Residues 57–265 (GLHPFVRTEA…RLWEVLLTGK (209 aa)) enclose the Rab-GAP TBC domain.

In terms of assembly, interacts with ACTB. Interacts with ARMC12. Interacts with TOMM20 and DNAH7. Interacts with RAP1A. Interacts with RAB10. In terms of tissue distribution, expressed in testis, specifically in elongating and elongated spermatids (at protein level). Expressed in the sperm midpiece (at protein level).

Its subcellular location is the cytoplasmic vesicle. It localises to the secretory vesicle. The protein resides in the acrosome. The protein localises to the cytoplasm. It is found in the cytoskeleton. Functionally, acts as a GTPase-activating protein for Rab family protein (s). Essential for the establishment of male fertility, and is required for both the production of normal sperm number and sperm function. Plays an important role in the formation of intact mitochondria, outer dense fibers and axoneme within the sperm tail. Essential for sperm mitochondrial sheath formation and for the interactions of ARMC12 with VDAC2 and VDAC3. May be involved in acrosome formation and cytoskeletal reorganization during spermiogenesis, possibly by regulating RAB3A activity. This Mus musculus (Mouse) protein is TBC1 domain family member 21.